Consider the following 407-residue polypeptide: Nuclear hormone receptor family member nhr-134 (407 aa).

The NR C4-type zinc finger occupies Cys-11–Cys-31. The NR C4-type; degenerate zinc finger occupies Arg-47–Cys-66. In terms of domain architecture, NR LBD spans Gln-157 to Thr-407.

Belongs to the nuclear hormone receptor family.

Its subcellular location is the nucleus. Its function is as follows. Orphan nuclear receptor. This is Nuclear hormone receptor family member nhr-134 (nhr-134) from Caenorhabditis elegans.